A 599-amino-acid polypeptide reads, in one-letter code: Vitamin B12-dependent ribonucleotide reductase (599 aa).

193–197 (PTGTI) serves as a coordination point for substrate. The tract at residues 519 to 555 (LAQSAPRQAGPAKAATTAPAAKAQEPAAAPSPKQAHN) is disordered. A compositionally biased stretch (low complexity) spans 526–553 (QAGPAKAATTAPAAKAQEPAAAPSPKQA).

This sequence belongs to the ribonucleoside diphosphate reductase class-2 family. Requires adenosylcob(III)alamin as cofactor.

It catalyses the reaction a 2'-deoxyribonucleoside 5'-diphosphate + [thioredoxin]-disulfide + H2O = a ribonucleoside 5'-diphosphate + [thioredoxin]-dithiol. In terms of biological role, catalyzes the reduction of ribonucleotides to deoxyribonucleotides. May function to provide a pool of deoxyribonucleotide precursors for DNA repair during oxygen limitation and/or for immediate growth after restoration of oxygen. In Streptantibioticus cattleyicolor (Streptomyces cattleya), this protein is Vitamin B12-dependent ribonucleotide reductase (nrdJ).